We begin with the raw amino-acid sequence, 252 residues long: 5-oxoprolinase subunit A (252 aa).

It belongs to the LamB/PxpA family. In terms of assembly, forms a complex composed of PxpA, PxpB and PxpC.

The enzyme catalyses 5-oxo-L-proline + ATP + 2 H2O = L-glutamate + ADP + phosphate + H(+). Functionally, catalyzes the cleavage of 5-oxoproline to form L-glutamate coupled to the hydrolysis of ATP to ADP and inorganic phosphate. In Corynebacterium glutamicum (strain ATCC 13032 / DSM 20300 / JCM 1318 / BCRC 11384 / CCUG 27702 / LMG 3730 / NBRC 12168 / NCIMB 10025 / NRRL B-2784 / 534), this protein is 5-oxoprolinase subunit A.